Here is a 132-residue protein sequence, read N- to C-terminus: Small ribosomal subunit protein uS8 (132 aa).

It belongs to the universal ribosomal protein uS8 family. In terms of assembly, part of the 30S ribosomal subunit. Contacts proteins S5 and S12.

Functionally, one of the primary rRNA binding proteins, it binds directly to 16S rRNA central domain where it helps coordinate assembly of the platform of the 30S subunit. The polypeptide is Small ribosomal subunit protein uS8 (Bradyrhizobium sp. (strain BTAi1 / ATCC BAA-1182)).